Here is a 61-residue protein sequence, read N- to C-terminus: Small ribosomal subunit protein uS14 (61 aa).

Positions 24, 27, 40, and 43 each coordinate Zn(2+).

The protein belongs to the universal ribosomal protein uS14 family. Zinc-binding uS14 subfamily. As to quaternary structure, part of the 30S ribosomal subunit. Contacts proteins S3 and S10. Zn(2+) is required as a cofactor.

In terms of biological role, binds 16S rRNA, required for the assembly of 30S particles and may also be responsible for determining the conformation of the 16S rRNA at the A site. The chain is Small ribosomal subunit protein uS14 from Ureaplasma parvum serovar 3 (strain ATCC 27815 / 27 / NCTC 11736).